Consider the following 145-residue polypeptide: uncharacterized protein (145 aa).

The signal sequence occupies residues 1 to 26 (MAILLPLKSILPWCCITFSFLLSSSG).

This is an uncharacterized protein from Saccharomyces cerevisiae (strain ATCC 204508 / S288c) (Baker's yeast).